The primary structure comprises 426 residues: Serine--tRNA ligase (426 aa).

L-serine is bound at residue 229-231 (TAE). ATP-binding positions include 260–262 (RTE) and V276. E283 is a binding site for L-serine. 350–353 (EVTS) contacts ATP. T386 provides a ligand contact to L-serine.

This sequence belongs to the class-II aminoacyl-tRNA synthetase family. Type-1 seryl-tRNA synthetase subfamily. Homodimer. The tRNA molecule binds across the dimer.

It localises to the cytoplasm. The enzyme catalyses tRNA(Ser) + L-serine + ATP = L-seryl-tRNA(Ser) + AMP + diphosphate + H(+). It catalyses the reaction tRNA(Sec) + L-serine + ATP = L-seryl-tRNA(Sec) + AMP + diphosphate + H(+). Its pathway is aminoacyl-tRNA biosynthesis; selenocysteinyl-tRNA(Sec) biosynthesis; L-seryl-tRNA(Sec) from L-serine and tRNA(Sec): step 1/1. In terms of biological role, catalyzes the attachment of serine to tRNA(Ser). Is also able to aminoacylate tRNA(Sec) with serine, to form the misacylated tRNA L-seryl-tRNA(Sec), which will be further converted into selenocysteinyl-tRNA(Sec). The sequence is that of Serine--tRNA ligase from Rhodopirellula baltica (strain DSM 10527 / NCIMB 13988 / SH1).